The chain runs to 220 residues: Ribosomal RNA large subunit methyltransferase E (220 aa).

The S-adenosyl-L-methionine site is built by G60, W62, D92, D108, and D133. K173 serves as the catalytic Proton acceptor. Residues 198–220 (KPKASRDKSSETFILGRQLKHPR) form a disordered region.

It belongs to the class I-like SAM-binding methyltransferase superfamily. RNA methyltransferase RlmE family.

The protein resides in the cytoplasm. It carries out the reaction uridine(2552) in 23S rRNA + S-adenosyl-L-methionine = 2'-O-methyluridine(2552) in 23S rRNA + S-adenosyl-L-homocysteine + H(+). Its function is as follows. Specifically methylates the uridine in position 2552 of 23S rRNA at the 2'-O position of the ribose in the fully assembled 50S ribosomal subunit. This chain is Ribosomal RNA large subunit methyltransferase E, found in Burkholderia cenocepacia (strain HI2424).